Consider the following 388-residue polypeptide: Na(+)/H(+) antiporter NhaA (388 aa).

The next 12 helical transmembrane spans lie at A13–P33, G36–A56, L59–V79, V95–F115, G125–G145, V154–F174, V179–W199, L213–I233, V259–V279, L287–F307, V328–L348, and L363–S383.

The protein belongs to the NhaA Na(+)/H(+) (TC 2.A.33) antiporter family.

It is found in the cell inner membrane. It carries out the reaction Na(+)(in) + 2 H(+)(out) = Na(+)(out) + 2 H(+)(in). In terms of biological role, na(+)/H(+) antiporter that extrudes sodium in exchange for external protons. This chain is Na(+)/H(+) antiporter NhaA, found in Serratia proteamaculans (strain 568).